The primary structure comprises 159 residues: Transcription antitermination protein NusB (159 aa).

Residues 1–20 form a disordered region; that stretch reads MNKNTQGKPSGKPVRRDGVD.

This sequence belongs to the NusB family.

Functionally, involved in transcription antitermination. Required for transcription of ribosomal RNA (rRNA) genes. Binds specifically to the boxA antiterminator sequence of the ribosomal RNA (rrn) operons. The sequence is that of Transcription antitermination protein NusB from Stenotrophomonas maltophilia (strain R551-3).